The sequence spans 186 residues: MSGPADSIEIQNVVASTGIGQELDLEALADDLPGADFNPDNFPGLVYRTQDPKAAALIFRSGKIVCTGAKSIDDVHDALGIIFDKLRELKIPVDDEPEITVQNIVSSADLGHNLNLNALAIGLGLEDVEYEPEQFPGLVYRMDEPKVVILLFGSGKIVITGGKRTDDAETAVEEIVERIDALGLLG.

Repeat copies occupy residues 10–86 (IQNV…FDKL) and 101–179 (VQNI…VERI). Residues Lys53 and Lys63 each participate in a glycyl lysine isopeptide (Lys-Gly) (interchain with G-Cter in SAMP2) cross-link.

Belongs to the TBP family.

Its function is as follows. General factor that plays a role in the activation of archaeal genes transcribed by RNA polymerase. Binds specifically to the TATA box promoter element which lies close to the position of transcription initiation. This chain is TATA-box-binding protein 2 (tbp2), found in Haloferax volcanii (strain ATCC 29605 / DSM 3757 / JCM 8879 / NBRC 14742 / NCIMB 2012 / VKM B-1768 / DS2) (Halobacterium volcanii).